Reading from the N-terminus, the 500-residue chain is Flt3-interacting zinc finger protein 1 (500 aa).

Residue Met-1 is modified to N-acetylmethionine. A disordered region spans residues 1–24 (MEDSSLPVVPAPIAAPGPAPSATA). A compositionally biased stretch (pro residues) spans 9 to 19 (VPAPIAAPGPA). 6 consecutive C2H2-type zinc fingers follow at residues 29–51 (FHCS…FARH), 57–79 (HACP…LRSH), 85–107 (YRCS…QVVH), 113–136 (YCCL…KRQH), 204–226 (FACG…WAAH), and 232–254 (FKCP…KLTH). Disordered stretches follow at residues 255-284 (DLQG…ASEV) and 306-328 (KLEA…AAAE). The span at 256–267 (LQGSNAPPTQVW) shows a compositional bias: polar residues. 5 consecutive C2H2-type zinc fingers follow at residues 336 to 357 (YQCD…LEAH), 363 to 386 (YGCG…RASH), 418 to 440 (FGCS…VLVH), 446 to 468 (FPCL…RLLH), and 474 to 496 (FPCH…LKLH). Residues 383 to 415 (RASHGEGSGEAAPDGEGNQAAGGPGPGSSSRSK) are disordered.

Interacts with FLT3 cytoplasmic catalytic domain, following receptor stimulation, in a kinase-independent manner. Does not interact with other structurally related receptor tyrosine kinases, including KIT, CSF1R and PDGFR. Interacts with NRL. Widely expressed. In the retina, highest expression in the ganglion cell layer.

Its subcellular location is the cytoplasm. The protein localises to the nucleus. Functionally, may be a transcriptional repressor of NRL function in photoreceptors. Does not repress CRX-mediated transactivation. The chain is Flt3-interacting zinc finger protein 1 (Fiz1) from Mus musculus (Mouse).